A 370-amino-acid polypeptide reads, in one-letter code: MMAAASDSCLSLWEGSASSPNRQLTPEAVNCLTEALTEDVAVLRLIRSDPRVKIFMAVSVLTPRLARFAPPPPKLTHTAKCAVIMIYLTRPKALALQPKQFHMLVTFNKASVYSLVVRVKTKPFPVGTQRFRAVFQDPESIGLPSDIPDPAAENIPTEINDRLDVSNFATPAQPPKDKYDCCVLAPGVWWSNANKAIYFLQMDVALLALCPAGWKARGLGIILGRLLNHQEGCATCRFTEHSDPLNATADSVATPESCLCWAPCLWRKAHQRELTVEGDRYLFRVLFMDAVERVRLTGLRRSPKITANLADLVVGIGPHGQQIPVNNAGWKLVALDADISRLIVCGCYALRYICPPTNSKHQPSSPDEYA.

The protein belongs to the herpesviridae cytoplasmic envelopment protein 2 family. In terms of assembly, interacts with cytoplasmic envelopment protein 3 and with the capsid.

The protein resides in the virion tegument. The protein localises to the host cytoplasm. Its subcellular location is the host nucleus. Its function is as follows. Plays a critical role in cytoplasmic virus egress. Participates in the final step of tegumentation and envelope acquisition within the host cytoplasm by directly interacting with the capsid. Upon virion binding to target cell, a signaling cascade is triggered to disrupt the interaction with the capsid, thereby preparing capsid uncoating. The protein is Cytoplasmic envelopment protein 2 of Equine herpesvirus 1 (strain V592) (EHV-1).